Consider the following 316-residue polypeptide: Acetylglutamate kinase (316 aa).

Substrate is bound by residues 65 to 66 (GG), R87, and N179.

Belongs to the acetylglutamate kinase family. ArgB subfamily.

It localises to the cytoplasm. It catalyses the reaction N-acetyl-L-glutamate + ATP = N-acetyl-L-glutamyl 5-phosphate + ADP. Its pathway is amino-acid biosynthesis; L-arginine biosynthesis; N(2)-acetyl-L-ornithine from L-glutamate: step 2/4. Its function is as follows. Catalyzes the ATP-dependent phosphorylation of N-acetyl-L-glutamate. The protein is Acetylglutamate kinase of Alkaliphilus metalliredigens (strain QYMF).